Reading from the N-terminus, the 379-residue chain is Peritrophin-48 (379 aa).

The signal sequence occupies residues M1–A20. Chitin-binding type-2 domains are found at residues A25 to F83 and A86 to N143. Intrachain disulfides connect C60–C73 and C120–C133. N150 and N168 each carry an N-linked (GlcNAc...) asparagine glycan. 3 consecutive Chitin-binding type-2 domains span residues L151–R208, T224–K283, and C285–N356. The cysteines at positions 185 and 198 are disulfide-linked. Residues N247 and N252 are each glycosylated (N-linked (GlcNAc...) asparagine). C324 and C337 are disulfide-bonded. N341, N356, and N373 each carry an N-linked (GlcNAc...) asparagine glycan.

Post-translationally, glycosylated. As to expression, larval peritrophic membrane.

In terms of biological role, binds chitin and may bind related oligosaccharide structures. This is Peritrophin-48 from Chrysomya bezziana (Old world screw-worm fly).